The primary structure comprises 495 residues: MAAGAPAAGARRGGSEAICNLVICNDSSLRSQPIIFNPDFFVEKLRHEKPEVFTELVVSNITRLIDLPGAELAQLMGEEDPKLPGANSTASGFFRSLMSLKRKEKGVVFGSPLTEEGIAQVSQLIEYLHKNLRAEGLFRVPGNSIRQQILKDALNSGTDIDLDSGEFHSNDVATLLKMFLGELPEPLLTHKHFHAHLKIADLTLFDEKGNKTSTPDKERQIEALQLLFLILPAPNRSLLKLLLDLLYQTAKKQDKNKMSAHNLALMFAPHILWPRNVTANDLQENITKLNNGVTFMIKHSQKLFKAPAYIRECARLHYLGSRAHTSKDDLDLLTSPGSKELQPLKSQKRSRLDSCHQEETQQRTEEALRELFRHVHNMPDSAKKKKLIRQFNKHPSALTPSSDVATPPAPRRARSRSFSGLIKRKVLGTPVIQERKSRDSTPEPKRVSKENVHLLQKCGSPAHMSQGKLKSLEGQKEESCRRMRAHLLSKDSSSL.

In terms of domain architecture, Rho-GAP spans 98–304 (MSLKRKEKGV…FMIKHSQKLF (207 aa)). 2 disordered regions span residues 327–362 (KDDL…ETQQ) and 393–495 (KHPS…SSSL). Basic and acidic residues-rich tracts occupy residues 350-362 (SRLD…ETQQ), 433-452 (QERK…KENV), and 470-481 (KSLEGQKEESCR).

Functionally, GTPase activator for the Rho-type GTPases by converting them to an inactive GDP-bound state. The protein is Rho GTPase-activating protein 19 (ARHGAP19) of Gallus gallus (Chicken).